The sequence spans 754 residues: Polycomb protein mes-3 (754 aa).

The segment at 1–83 is disordered; sequence MTPATAEVKV…PTKLENIQKT (83 aa). Basic and acidic residues predominate over residues 31–40; the sequence is ARREEEKENL. Residues 51–61 show a composition bias toward low complexity; sequence SSEAGSSRESS.

Forms a heterotrimeric complex with the Polycomb proteins mes-2 and mes-3. Does not interact with mes-4. Interacts with nyfa-1. As to expression, in adults, it is predominantly expressed in the germline, and weakly expressed in intestinal cells.

The protein localises to the nucleus. Its function is as follows. Component of a Polycomb group (PcG) complex. PcG proteins act by forming multiprotein complexes, which are required to maintain the transcriptionally repressive state of homeotic genes throughout development. In association with the nfya-1-NF-Y complex, may play a role in repressing the expression of the homeobox protein egl-5 in tissues such as the head. PcG proteins are not required to initiate repression, but to maintain it during later stages of development. The mes-2/mes-3/mes-6 complex may participate in the global inactivation of the X chromosomes in germline cells. The complex may act via methylation of histone H3 'Lys-27', rendering chromatin heritably changed in its expressibility. This complex is required to exclude mes-4 from the inactivated X-chromosomes in germline cells. The polypeptide is Polycomb protein mes-3 (Caenorhabditis elegans).